The sequence spans 148 residues: IQ domain-containing protein F5 (148 aa).

2 IQ domains span residues 11 to 40 (ETSA…SAWI) and 67 to 96 (KTWA…AVRI).

In Mus musculus (Mouse), this protein is IQ domain-containing protein F5 (Iqcf5).